A 168-amino-acid polypeptide reads, in one-letter code: Large ribosomal subunit protein uL16 (168 aa).

This sequence belongs to the universal ribosomal protein uL16 family.

The protein is Large ribosomal subunit protein uL16 of Thermofilum pendens (strain DSM 2475 / Hrk 5).